Reading from the N-terminus, the 410-residue chain is Adenosylhomocysteinase (410 aa).

Positions 117 and 142 each coordinate substrate. Residue 143-145 coordinates NAD(+); the sequence is TTT. Substrate contacts are provided by K172 and D176. NAD(+) contacts are provided by residues N177, 206 to 211, E229, 285 to 287, and N332; these read GYGYCG and AGH.

The protein belongs to the adenosylhomocysteinase family. The cofactor is NAD(+).

It is found in the cytoplasm. The catalysed reaction is S-adenosyl-L-homocysteine + H2O = L-homocysteine + adenosine. The protein operates within amino-acid biosynthesis; L-homocysteine biosynthesis; L-homocysteine from S-adenosyl-L-homocysteine: step 1/1. May play a key role in the regulation of the intracellular concentration of adenosylhomocysteine. The protein is Adenosylhomocysteinase of Thermoplasma volcanium (strain ATCC 51530 / DSM 4299 / JCM 9571 / NBRC 15438 / GSS1).